Reading from the N-terminus, the 525-residue chain is Cytochrome P450 monooxygenase tpcC (525 aa).

Residues Leu-13–Val-33 form a helical membrane-spanning segment. A heme-binding site is contributed by Cys-457.

It belongs to the cytochrome P450 family. Heme serves as cofactor.

The protein localises to the membrane. The protein operates within secondary metabolite biosynthesis; terpenoid biosynthesis. In terms of biological role, cytochrome P450 monooxygenase; part of the gene cluster that mediates the biosynthesis of terpestacin. The bifunctional terpene synthase tpcA converts isopentenyl diphosphate (IPP) and dimethylallyl diphosphate (DMAPP) into the sesterterpene preterpestacin I. The C-terminal prenyltransferase (PT) domain of tpcA catalyzes formation of GFPP, whereas the N-terminal terpene cyclase (TC) domain catalyzes the cyclization of GFPP into preterpestacin I. The cytochrome P450 monooxygenase tpcB then hydroxylates preterpestacin I to yield 24-hydroxypreterpstacin I (renamed as preterpestacin II) whereas the cytochrome P450 monooxygenase tpcC further hydroxylates preterpestacin II to yield 16,17-dihydroxypreterpestacin II (renamed as preterpestacin III). Finally, the FAD-dependent monooxygenase tpcD converts preterpestacin III into terpestacin. In Cochliobolus heterostrophus (strain C5 / ATCC 48332 / race O) (Southern corn leaf blight fungus), this protein is Cytochrome P450 monooxygenase tpcC.